A 301-amino-acid polypeptide reads, in one-letter code: Radial spoke head 1 homolog (301 aa).

Residues 1–20 are compositionally biased toward acidic residues; the sequence is MSDLGSEELEEEGENDLGEY. The segment at 1–41 is disordered; that stretch reads MSDLGSEELEEEGENDLGEYEGERNEVGERHGHGKARLPNG. 6 MORN repeats span residues 20–43, 44–66, 67–89, 90–112, 113–135, and 159–181; these read YEGERNEVGERHGHGKARLPNGDT, YEGSYEFGKRHGQGTYKFKNGAR, YTGDYVKNKKHGQGTFIYPDGSR, YEGEWADDQRHGQGVYYYVNNDT, YTGEWFNHQRHGQGTYLYAETGS, and YQGKFMNKNPVGPGKYVFDIGCE. The segment covering 21–31 has biased composition (basic and acidic residues); that stretch reads EGERNEVGERH. The disordered stretch occupies residues 225–301; that stretch reads LSEEQPPPEG…FDEEPSDLQD (77 aa). The segment covering 249 to 261 has biased composition (acidic residues); the sequence is PSEDIQAEGFEGE. Positions 262–278 are enriched in basic and acidic residues; that stretch reads LEPRGADEDVDTFRQES. Polar residues predominate over residues 279-290; it reads QENSYDIDQGNL. Residues 292 to 301 show a composition bias toward acidic residues; it reads FDEEPSDLQD.

As to quaternary structure, component of the axonemal radial spoke 1 (RS1) and 2 (RS2) complexes, at least composed of spoke head proteins RSPH1, RSPH3, RSPH9 and the cilia-specific component RSPH4A or sperm-specific component RSPH6A, spoke stalk proteins RSPH14, DNAJB13, DYDC1, ROPN1L and NME5, and the RS1 complex-specific anchor protein IQUB. Interacts with RSPH3B. Interacts with RSPH4A. Interacts with RSPH6A. Expressed in the trachea, ependymal cells, oviduct and ependymal cells (at protein level). Germ cell specific. Specifically expressed in testis, and to a lower extent in ovary. Not expressed in somatic tissues.

It is found in the cytoplasm. It localises to the chromosome. Its subcellular location is the cytoskeleton. The protein resides in the cilium axoneme. The protein localises to the flagellum axoneme. Functionally, functions as part of axonemal radial spoke complexes that play an important part in the motility of sperm and cilia. This chain is Radial spoke head 1 homolog (Rsph1), found in Mus musculus (Mouse).